A 312-amino-acid polypeptide reads, in one-letter code: DNA-directed RNA polymerase subunit alpha (312 aa).

The interval 1–226 (MIEFEKPIIT…EHLNLFTDLT (226 aa)) is alpha N-terminal domain (alpha-NTD). The alpha C-terminal domain (alpha-CTD) stretch occupies residues 243–312 (DEKVLDRTIE…DLGLGLKNDK (70 aa)).

It belongs to the RNA polymerase alpha chain family. Homodimer. The RNAP catalytic core consists of 2 alpha, 1 beta, 1 beta' and 1 omega subunit. When a sigma factor is associated with the core the holoenzyme is formed, which can initiate transcription.

It carries out the reaction RNA(n) + a ribonucleoside 5'-triphosphate = RNA(n+1) + diphosphate. Its function is as follows. DNA-dependent RNA polymerase catalyzes the transcription of DNA into RNA using the four ribonucleoside triphosphates as substrates. In Streptococcus pyogenes serotype M1, this protein is DNA-directed RNA polymerase subunit alpha.